Reading from the N-terminus, the 1132-residue chain is Myosin-binding protein C, fast-type (1132 aa).

The interval M1 to V59 is disordered. The span at P9 to E44 shows a compositional bias: basic and acidic residues. 5 Ig-like C2-type domains span residues P48–V149, S249–P338, P339–K429, Q430–P530, and P531–V630. 2 consecutive Fibronectin type-III domains span residues P633–T729 and E731–I826. The Ig-like C2-type 6 domain occupies P830–R923. Positions P926–G1022 constitute a Fibronectin type-III 3 domain. The Ig-like C2-type 7 domain maps to P1039–Q1132.

The protein belongs to the immunoglobulin superfamily. MyBP family.

Its function is as follows. Thick filament-associated protein located in the crossbridge region of vertebrate striated muscle a bands. In vitro it binds MHC, F-actin and native thin filaments, and modifies the activity of actin-activated myosin ATPase. It may modulate muscle contraction or may play a more structural role. The protein is Myosin-binding protein C, fast-type (MYBPC2) of Gallus gallus (Chicken).